The following is a 244-amino-acid chain: tRNA (guanine-N(1)-)-methyltransferase (244 aa).

Residues glycine 113 and 132–137 (IGDYVL) each bind S-adenosyl-L-methionine.

The protein belongs to the RNA methyltransferase TrmD family. As to quaternary structure, homodimer.

The protein resides in the cytoplasm. It catalyses the reaction guanosine(37) in tRNA + S-adenosyl-L-methionine = N(1)-methylguanosine(37) in tRNA + S-adenosyl-L-homocysteine + H(+). Its function is as follows. Specifically methylates guanosine-37 in various tRNAs. The chain is tRNA (guanine-N(1)-)-methyltransferase from Shouchella clausii (strain KSM-K16) (Alkalihalobacillus clausii).